The chain runs to 499 residues: Aspartyl/glutamyl-tRNA(Asn/Gln) amidotransferase subunit B (499 aa).

The protein belongs to the GatB/GatE family. GatB subfamily. In terms of assembly, heterotrimer of A, B and C subunits.

The catalysed reaction is L-glutamyl-tRNA(Gln) + L-glutamine + ATP + H2O = L-glutaminyl-tRNA(Gln) + L-glutamate + ADP + phosphate + H(+). It carries out the reaction L-aspartyl-tRNA(Asn) + L-glutamine + ATP + H2O = L-asparaginyl-tRNA(Asn) + L-glutamate + ADP + phosphate + 2 H(+). Functionally, allows the formation of correctly charged Asn-tRNA(Asn) or Gln-tRNA(Gln) through the transamidation of misacylated Asp-tRNA(Asn) or Glu-tRNA(Gln) in organisms which lack either or both of asparaginyl-tRNA or glutaminyl-tRNA synthetases. The reaction takes place in the presence of glutamine and ATP through an activated phospho-Asp-tRNA(Asn) or phospho-Glu-tRNA(Gln). The sequence is that of Aspartyl/glutamyl-tRNA(Asn/Gln) amidotransferase subunit B from Bartonella tribocorum (strain CIP 105476 / IBS 506).